A 669-amino-acid polypeptide reads, in one-letter code: uncharacterized protein (669 aa).

6 helical membrane passes run 39–61 (LCPL…GTSW), 124–146 (ISLW…LISI), 153–175 (GIIY…YALG), 190–212 (GLAF…FFGV), 221–243 (FAPG…QTAL), and 263–285 (IAAG…IRYL). RCK C-terminal domains lie at 316–397 (AGSL…KLIG) and 398–483 (KESD…LGGR). The next 5 membrane-spanning stretches (helical) occupy residues 484–506 (PILN…GYIF), 516–538 (IPFA…YWRS), 558–580 (IGLN…ESFH), 585–607 (IWVA…VVGI), and 645–667 (VPYP…FAML).

This sequence belongs to the AAE transporter (TC 2.A.81) family.

It is found in the cell membrane. This is an uncharacterized protein from Desulfotalea psychrophila (strain LSv54 / DSM 12343).